A 283-amino-acid polypeptide reads, in one-letter code: NAD kinase (283 aa).

Catalysis depends on Asp69, which acts as the Proton acceptor. NAD(+)-binding positions include 69-70 (DG), 138-139 (NE), Lys166, Asp168, Leu176, 179-184 (TAYNLS), and Gln235.

It belongs to the NAD kinase family. Requires a divalent metal cation as cofactor.

The protein resides in the cytoplasm. The catalysed reaction is NAD(+) + ATP = ADP + NADP(+) + H(+). Its function is as follows. Involved in the regulation of the intracellular balance of NAD and NADP, and is a key enzyme in the biosynthesis of NADP. Catalyzes specifically the phosphorylation on 2'-hydroxyl of the adenosine moiety of NAD to yield NADP. The chain is NAD kinase from Helicobacter acinonychis (strain Sheeba).